A 902-amino-acid polypeptide reads, in one-letter code: DNA mismatch repair protein MutS (902 aa).

654 to 661 (GPNMGGKS) contributes to the ATP binding site.

It belongs to the DNA mismatch repair MutS family.

Its function is as follows. This protein is involved in the repair of mismatches in DNA. It is possible that it carries out the mismatch recognition step. This protein has a weak ATPase activity. The protein is DNA mismatch repair protein MutS of Xanthomonas axonopodis pv. citri (strain 306).